A 426-amino-acid chain; its full sequence is Testicular acid phosphatase (426 aa).

Positions methionine 1–alanine 26 are cleaved as a signal peptide. Topologically, residues leucine 27–proline 393 are extracellular. Catalysis depends on histidine 41, which acts as the Nucleophile. Cystine bridges form between cysteine 159-cysteine 378, cysteine 214-cysteine 312, and cysteine 353-cysteine 357. 2 N-linked (GlcNAc...) asparagine glycosylation sites follow: asparagine 191 and asparagine 269. Aspartate 289 serves as the catalytic Proton donor. N-linked (GlcNAc...) asparagine glycans are attached at residues asparagine 330 and asparagine 339. A helical transmembrane segment spans residues leucine 394–tryptophan 414. The Cytoplasmic portion of the chain corresponds to arginine 415–valine 426.

The protein belongs to the histidine acid phosphatase family. As to quaternary structure, homodimer. Glycosylated. Expressed mainly in the testis. Also expressed in the brain where they are enriched at the postsynaptic sites. Expressed at lower levels in the trachea, prostate, bone marrow, spinal cord, colon, fetal brain, heart, thymus, fetal liver, spleen, leukocytes, ovary, small intestine, pancreas and skeletal muscle. Expression is significantly lower in testicular cancer tissues than in normal testicular tissues. Isoform 3 is expressed in the testis, trachea, prostate and bone marrow.

The protein resides in the membrane. It catalyses the reaction a phosphate monoester + H2O = an alcohol + phosphate. May dephosphorylate receptor tyrosine-protein kinase ERBB4 and inhibits its ligand-induced proteolytic cleavage. May play a role in odontogenesis. This Homo sapiens (Human) protein is Testicular acid phosphatase.